Here is a 332-residue protein sequence, read N- to C-terminus: Ribosomal RNA small subunit methyltransferase C (332 aa).

It belongs to the methyltransferase superfamily. RsmC family. In terms of assembly, monomer.

It localises to the cytoplasm. It carries out the reaction guanosine(1207) in 16S rRNA + S-adenosyl-L-methionine = N(2)-methylguanosine(1207) in 16S rRNA + S-adenosyl-L-homocysteine + H(+). Its function is as follows. Specifically methylates the guanine in position 1207 of 16S rRNA in the 30S particle. This Stutzerimonas stutzeri (strain A1501) (Pseudomonas stutzeri) protein is Ribosomal RNA small subunit methyltransferase C.